We begin with the raw amino-acid sequence, 488 residues long: Proline--tRNA ligase (488 aa).

Belongs to the class-II aminoacyl-tRNA synthetase family. ProS type 3 subfamily. Homodimer.

The protein resides in the cytoplasm. It catalyses the reaction tRNA(Pro) + L-proline + ATP = L-prolyl-tRNA(Pro) + AMP + diphosphate. Its function is as follows. Catalyzes the attachment of proline to tRNA(Pro) in a two-step reaction: proline is first activated by ATP to form Pro-AMP and then transferred to the acceptor end of tRNA(Pro). This is Proline--tRNA ligase from Symbiobacterium thermophilum (strain DSM 24528 / JCM 14929 / IAM 14863 / T).